A 147-amino-acid polypeptide reads, in one-letter code: Large ribosomal subunit protein uL15 (147 aa).

A compositionally biased stretch (basic residues) spans 1–28; that stretch reads MIRRRKKVRKLRGSHTHGWGCKKKHRGG. The tract at residues 1 to 43 is disordered; the sequence is MIRRRKKVRKLRGSHTHGWGCKKKHRGGGSKGGRGMAGTGKRN. Over residues 29–38 the composition is skewed to gly residues; that stretch reads GSKGGRGMAG.

It belongs to the universal ribosomal protein uL15 family. Part of the 50S ribosomal subunit.

Its function is as follows. Binds to the 23S rRNA. The polypeptide is Large ribosomal subunit protein uL15 (Pyrococcus abyssi (strain GE5 / Orsay)).